Reading from the N-terminus, the 218-residue chain is MRVGVIRFPGSNCDRDVHHVLELAGAEPEYVWWNQRNLDHLDAVVIPGGFSYGDYLRAGAIAAITPVMDAVRELVREEKPVLGICNGAQILAEVGLVPGVFTVNEHPKFNCQWTELRVKTTRTPFTGLFKKDEVIRMPVAHAEGRYYHDNISEVWENDQVVLQFHGENPNGSLDGITGVCDESGLVCAVMPHPERASEEILGSVDGFKFFRGILKFRG.

Residues 2-218 (RVGVIRFPGS…FFRGILKFRG (217 aa)) form the Glutamine amidotransferase type-1 domain. C85 functions as the Nucleophile in the catalytic mechanism. Catalysis depends on residues H192 and E194.

Part of the FGAM synthase complex composed of 1 PurL, 1 PurQ and 2 PurS subunits.

Its subcellular location is the cytoplasm. It catalyses the reaction N(2)-formyl-N(1)-(5-phospho-beta-D-ribosyl)glycinamide + L-glutamine + ATP + H2O = 2-formamido-N(1)-(5-O-phospho-beta-D-ribosyl)acetamidine + L-glutamate + ADP + phosphate + H(+). It carries out the reaction L-glutamine + H2O = L-glutamate + NH4(+). Its pathway is purine metabolism; IMP biosynthesis via de novo pathway; 5-amino-1-(5-phospho-D-ribosyl)imidazole from N(2)-formyl-N(1)-(5-phospho-D-ribosyl)glycinamide: step 1/2. Functionally, part of the phosphoribosylformylglycinamidine synthase complex involved in the purines biosynthetic pathway. Catalyzes the ATP-dependent conversion of formylglycinamide ribonucleotide (FGAR) and glutamine to yield formylglycinamidine ribonucleotide (FGAM) and glutamate. The FGAM synthase complex is composed of three subunits. PurQ produces an ammonia molecule by converting glutamine to glutamate. PurL transfers the ammonia molecule to FGAR to form FGAM in an ATP-dependent manner. PurS interacts with PurQ and PurL and is thought to assist in the transfer of the ammonia molecule from PurQ to PurL. In Methanothermobacter thermautotrophicus (strain ATCC 29096 / DSM 1053 / JCM 10044 / NBRC 100330 / Delta H) (Methanobacterium thermoautotrophicum), this protein is Phosphoribosylformylglycinamidine synthase subunit PurQ.